A 221-amino-acid polypeptide reads, in one-letter code: Probable hydrogenase maturation factor HypB (221 aa).

The G-domain stretch occupies residues 35–196 (AFDFMGAIGS…KRINPDAEVV (162 aa)). Ni(2+) is bound by residues C95 and H96. Residues C95, H96, H100, H104, and C127 each contribute to the Zn(2+) site. Residue C127 coordinates Ni(2+).

The protein belongs to the SIMIBI class G3E GTPase family. HypB/HupM subfamily. In terms of assembly, homodimer.

Involved in the maturation of [NiFe] hydrogenases. Required for nickel insertion into the metal center of the hydrogenase. Exhibits a low intrinsic GTPase activity, which is essential for nickel insertion. This is Probable hydrogenase maturation factor HypB from Methanocaldococcus jannaschii (strain ATCC 43067 / DSM 2661 / JAL-1 / JCM 10045 / NBRC 100440) (Methanococcus jannaschii).